A 577-amino-acid polypeptide reads, in one-letter code: MFS-type transporter pgmG (577 aa).

Residues 1 to 32 (MSETVTQTETDQRPATARSLGAEEKEAKSDEQ) are disordered. A compositionally biased stretch (basic and acidic residues) spans 21–31 (GAEEKEAKSDE). Helical transmembrane passes span 45-65 (FIVI…NTIV), 84-104 (WLSV…SKIY), 111-131 (WLYL…GAAP), 141-161 (ALAG…LSVN), 174-194 (TGLT…GFAV), 218-238 (PLTV…LFML), 259-279 (LGTI…NFGG), and 292-312 (CFVV…YCIG). Residue asparagine 317 is glycosylated (N-linked (GlcNAc...) asparagine). A helical transmembrane segment spans residues 330–350 (FIILFVQTASVATVFFVPIYF). Asparagine 360 carries an N-linked (GlcNAc...) asparagine glycan. 5 helical membrane-spanning segments follow: residues 363–383 (AIDA…AMIL), 395–415 (MPWY…MYTI), 426–446 (GYMI…FAVA), 457–477 (VATG…LAIA), and 532–552 (ISQV…LAIF).

It belongs to the major facilitator superfamily. TCR/Tet family.

The protein localises to the membrane. MFS-type transporter; part of the gene cluster that mediates the biosynthesis of pleosporalin A, ascomycone A, as well as a third cryptic naphthoquinone derived pigment, all responsible for the coloration of conidia. Seems not to be involved in pigment biosynthesis although its expression is regulated by the cluster-specific transcription factor pgmR. The polypeptide is MFS-type transporter pgmG (Aspergillus terreus (strain NIH 2624 / FGSC A1156)).